Consider the following 165-residue polypeptide: Putative protein FAM86C2P (165 aa).

The protein belongs to the class I-like SAM-binding methyltransferase superfamily. EEF2KMT family.

The protein is Putative protein FAM86C2P (FAM86C2P) of Homo sapiens (Human).